Consider the following 186-residue polypeptide: Der GTPase-activating protein YihI (186 aa).

The disordered stretch occupies residues lysine 42 to aspartate 77. Residues serine 62–aspartate 77 show a composition bias toward basic and acidic residues.

It belongs to the YihI family. In terms of assembly, interacts with Der.

A GTPase-activating protein (GAP) that modifies Der/EngA GTPase function. May play a role in ribosome biogenesis. In Haemophilus influenzae (strain ATCC 51907 / DSM 11121 / KW20 / Rd), this protein is Der GTPase-activating protein YihI.